The sequence spans 93 residues: Acylphosphatase (93 aa).

Residues 6 to 93 form the Acylphosphatase-like domain; sequence RAIVTVKGLV…GEFDTFDVRY (88 aa). Active-site residues include Arg21 and Asn39.

The protein belongs to the acylphosphatase family.

The catalysed reaction is an acyl phosphate + H2O = a carboxylate + phosphate + H(+). This chain is Acylphosphatase (acyP), found in Geobacter metallireducens (strain ATCC 53774 / DSM 7210 / GS-15).